A 199-amino-acid polypeptide reads, in one-letter code: Holliday junction branch migration complex subunit RuvA (199 aa).

The tract at residues 1–64 (MIALLTGKLA…EDAINLYGFR (64 aa)) is domain I. The domain II stretch occupies residues 65–143 (TQQEKELFQL…KLGLAQPQAG (79 aa)). Positions 144–148 (GATAP) are flexible linker. The interval 149–199 (AKQEIRDDVLSALINLGYKEAVVQKALAELKVTEDATVELVLKQALKILMK) is domain III.

The protein belongs to the RuvA family. In terms of assembly, homotetramer. Forms an RuvA(8)-RuvB(12)-Holliday junction (HJ) complex. HJ DNA is sandwiched between 2 RuvA tetramers; dsDNA enters through RuvA and exits via RuvB. An RuvB hexamer assembles on each DNA strand where it exits the tetramer. Each RuvB hexamer is contacted by two RuvA subunits (via domain III) on 2 adjacent RuvB subunits; this complex drives branch migration. In the full resolvosome a probable DNA-RuvA(4)-RuvB(12)-RuvC(2) complex forms which resolves the HJ.

The protein localises to the cytoplasm. The RuvA-RuvB-RuvC complex processes Holliday junction (HJ) DNA during genetic recombination and DNA repair, while the RuvA-RuvB complex plays an important role in the rescue of blocked DNA replication forks via replication fork reversal (RFR). RuvA specifically binds to HJ cruciform DNA, conferring on it an open structure. The RuvB hexamer acts as an ATP-dependent pump, pulling dsDNA into and through the RuvAB complex. HJ branch migration allows RuvC to scan DNA until it finds its consensus sequence, where it cleaves and resolves the cruciform DNA. The protein is Holliday junction branch migration complex subunit RuvA of Geobacter sp. (strain M21).